The chain runs to 166 residues: Ribosome maturation factor RimM (166 aa).

In terms of domain architecture, PRC barrel spans 94 to 165; that stretch reads EGEYYLGKLI…TIELKVLDLL (72 aa).

The protein belongs to the RimM family. In terms of assembly, binds ribosomal protein uS19.

The protein localises to the cytoplasm. An accessory protein needed during the final step in the assembly of 30S ribosomal subunit, possibly for assembly of the head region. Essential for efficient processing of 16S rRNA. May be needed both before and after RbfA during the maturation of 16S rRNA. It has affinity for free ribosomal 30S subunits but not for 70S ribosomes. This is Ribosome maturation factor RimM from Borreliella afzelii (strain PKo) (Borrelia afzelii).